Reading from the N-terminus, the 127-residue chain is Large ribosomal subunit protein bL12 (127 aa).

It belongs to the bacterial ribosomal protein bL12 family. Homodimer. Part of the ribosomal stalk of the 50S ribosomal subunit. Forms a multimeric L10(L12)X complex, where L10 forms an elongated spine to which 2 to 4 L12 dimers bind in a sequential fashion. Binds GTP-bound translation factors.

Forms part of the ribosomal stalk which helps the ribosome interact with GTP-bound translation factors. Is thus essential for accurate translation. The chain is Large ribosomal subunit protein bL12 from Rhizobium etli (strain CIAT 652).